Here is a 350-residue protein sequence, read N- to C-terminus: Patr class I histocompatibility antigen, alpha chain E (350 aa).

Positions 1-21 are cleaved as a signal peptide; sequence MVDGTLLLLLSEALALTQTWA. Residues 22 to 111 are alpha-1; sequence GSHSLKYFHT…LRGYYNQSEA (90 aa). Residues 22–305 lie on the Extracellular side of the membrane; it reads GSHSLKYFHT…KPASQPTIPI (284 aa). Asn-107 carries an N-linked (GlcNAc...) asparagine glycan. The tract at residues 112–203 is alpha-2; the sequence is GSHTLQWMHG…EKGKETLLHL (92 aa). 2 disulfides stabilise this stretch: Cys-122-Cys-185 and Cys-224-Cys-280. The interval 204–295 is alpha-3; it reads EPPKTHVTHH…GLPEPLTLRW (92 aa). Positions 206–294 constitute an Ig-like C1-type domain; that stretch reads PKTHVTHHPI…EGLPEPLTLR (89 aa). Residues 296-305 are connecting peptide; it reads KPASQPTIPI. Residues 306-329 traverse the membrane as a helical segment; that stretch reads VGIIAGLVLLGSVVSGAVVAAVMW. The Cytoplasmic segment spans residues 330-350; sequence RKKSSGGKGRSYSKAEWSDSA.

The protein belongs to the MHC class I family. In terms of assembly, heterodimer of an alpha chain and a beta chain (beta-2-microglobulin).

It is found in the membrane. In terms of biological role, preferably binds to a peptide derived from the signal sequence of most HLA-A, -B, -C and -G molecules. This is Patr class I histocompatibility antigen, alpha chain E (Patr-E) from Pan troglodytes (Chimpanzee).